Reading from the N-terminus, the 211-residue chain is Claudin-1 (211 aa).

Residues 1–7 (MANAGLQ) lie on the Cytoplasmic side of the membrane. Residues 8–28 (LLGFILASLGWIGSIVSTALP) form a helical membrane-spanning segment. The Extracellular portion of the chain corresponds to 29 to 81 (QWKIYSYAGDNIVTAQAIYEGLWMSCVSQSTGQIQCKVFDSLLNLNSTLQATR). Residues Cys54 and Cys64 are joined by a disulfide bond. The chain crosses the membrane as a helical span at residues 82–102 (ALMVIGILLGLIAIFVSTIGM). Residues 103–115 (KCMRCLEDDEVQK) lie on the Cytoplasmic side of the membrane. Residues 116–136 (MWMAVIGGIIFVISGLATLVA) traverse the membrane as a helical segment. The Extracellular segment spans residues 137–163 (TAWYGNRIVQEFYDPMTPVNARYEFGQ). Residues 164–184 (ALFTGWAAASLCLLGGALLSC) traverse the membrane as a helical segment. The Cytoplasmic segment spans residues 185–211 (SCPRKTTSYPTPRPYPKPTPSSGKDYV). The tract at residues 190–211 (TTSYPTPRPYPKPTPSSGKDYV) is disordered. An interactions with TJP1, TJP2, TJP3 and PATJ region spans residues 210–211 (YV).

This sequence belongs to the claudin family. Can form homo- and heteropolymers with other CLDN. Homopolymers interact with CLDN3, but not CLDN2, homopolymers. Directly interacts with TJP1/ZO-1, TJP2/ZO-2 and TJP3/ZO-3. Interacts with MPDZ and PATJ. Interacts with OCLN, CD81, CLDN4, CLDN6 and CLDN9. In terms of tissue distribution, detected in epididymis (at protein level). Detected in testis and epididymis.

It localises to the cell junction. Its subcellular location is the tight junction. The protein resides in the cell membrane. It is found in the basolateral cell membrane. Its function is as follows. Claudins function as major constituents of the tight junction complexes that regulate the permeability of epithelia. While some claudin family members play essential roles in the formation of impermeable barriers, others mediate the permeability to ions and small molecules. Often, several claudin family members are coexpressed and interact with each other, and this determines the overall permeability. CLDN1 is required to prevent the paracellular diffusion of small molecules through tight junctions in the epidermis and is required for the normal barrier function of the skin. Required for normal water homeostasis and to prevent excessive water loss through the skin, probably via an indirect effect on the expression levels of other proteins, since CLDN1 itself seems to be dispensable for water barrier formation in keratinocyte tight junctions. The protein is Claudin-1 (Cldn1) of Rattus norvegicus (Rat).